The sequence spans 117 residues: MARVKTGVVRRRRHKKVLKLARGFYSGRRKHFRKAKEQLERSLVYAYRDRRRKKRDFRRLWIVRINAACRLNDLSYSRFINGLKKAGIELDRKILADLAMNDSAAFAKIAEAAKKAL.

The protein belongs to the bacterial ribosomal protein bL20 family.

Its function is as follows. Binds directly to 23S ribosomal RNA and is necessary for the in vitro assembly process of the 50S ribosomal subunit. It is not involved in the protein synthesizing functions of that subunit. The protein is Large ribosomal subunit protein bL20 of Campylobacter jejuni subsp. jejuni serotype O:6 (strain 81116 / NCTC 11828).